The primary structure comprises 203 residues: Small ribosomal subunit protein uS4 (203 aa).

An S4 RNA-binding domain is found at 93–153 (RRFDNVVFRA…PKSKNMSAVS (61 aa)).

It belongs to the universal ribosomal protein uS4 family. In terms of assembly, part of the 30S ribosomal subunit. Contacts protein S5. The interaction surface between S4 and S5 is involved in control of translational fidelity.

Functionally, one of the primary rRNA binding proteins, it binds directly to 16S rRNA where it nucleates assembly of the body of the 30S subunit. In terms of biological role, with S5 and S12 plays an important role in translational accuracy. The chain is Small ribosomal subunit protein uS4 from Chlorobium phaeovibrioides (strain DSM 265 / 1930) (Prosthecochloris vibrioformis (strain DSM 265)).